The sequence spans 658 residues: Non-reducing end beta-L-arabinofuranosidase (658 aa).

Beta-L-arabinofuranose-binding positions include His-142, 192–194 (DGH), His-270, and Glu-322. Glu-322 serves as the catalytic Proton donor/acceptor. Positions 338, 340, 417, and 418 each coordinate Zn(2+). Cys-417 acts as the Nucleophile; S-glycosyl-cysteine intermediate in catalysis.

This sequence belongs to the glycosyl hydrolase 127 family. As to quaternary structure, homodimer in solution. Zn(2+) serves as cofactor.

It catalyses the reaction beta-L-arabinofuranosyl-(1-&gt;2)-beta-L-arabinofuranose + H2O = 2 beta-L-arabinofuranose. With respect to regulation, strongly inhibited in the presence of thiol modifiers, suggesting a crucial role for cysteine residues in catalysis. Slightly inhibited by EDTA. Its function is as follows. Beta-L-arabinofuranosidase that removes the beta-L-arabinofuranose residue from the non-reducing end of various substrates, including beta-L-arabinofuranosyl-hydroxyproline (Ara-Hyp), Ara-beta-1,2-Ara-beta-Hyp (Ara(2)-Hyp), Ara-beta-1,2-Ara-beta-1,2-Ara-beta-Hyp (Ara(3)-Hyp), and beta-L-arabinofuranosyl-(1-&gt;2)-1-O-methyl-beta-L-arabinofuranose. In the presence of 1-alkanols, shows transglycosylation activity, retaining the anomeric configuration of the arabinofuranose residue. This Bifidobacterium longum subsp. longum (strain ATCC 15707 / DSM 20219 / JCM 1217 / NCTC 11818 / E194b) protein is Non-reducing end beta-L-arabinofuranosidase.